Here is a 61-residue protein sequence, read N- to C-terminus: UPF0434 protein Avin_14770 (61 aa).

The protein belongs to the UPF0434 family.

This chain is UPF0434 protein Avin_14770, found in Azotobacter vinelandii (strain DJ / ATCC BAA-1303).